An 817-amino-acid chain; its full sequence is LisH domain-containing protein ARMC9 (817 aa).

The 33-residue stretch at 7 to 39 folds into the LisH domain; the sequence is HESELLGLVKEYLDFAEFEDTLKTFSKECKVKG. Residues 204-230 adopt a coiled-coil conformation; sequence GPNSKELLQQLHQQLVEAERRAMTYLK. Phosphoserine is present on Ser583. 2 disordered regions span residues 637–659 and 761–817; these read RKGP…TPGG and CKPQ…SIRK. The span at 765-774 shows a compositional bias: polar residues; the sequence is VPSTPETVEQ. Low complexity predominate over residues 793 to 807; sequence PQQASRPASTASSTR. Over residues 808 to 817 the composition is skewed to polar residues; sequence GLHSSQSIRK.

As to quaternary structure, interacts with TOGARAM1, CCDC66, CEP104, CSPP1 and CEP290. Interacts with NDUFAF2.

Its subcellular location is the cytoplasm. It localises to the cytoskeleton. The protein resides in the cilium basal body. It is found in the cell projection. The protein localises to the cilium. Its subcellular location is the microtubule organizing center. It localises to the centrosome. The protein resides in the centriole. Involved in ciliogenesis. It is required for appropriate acetylation and polyglutamylation of ciliary microtubules, and regulation of cilium length. Acts as a positive regulator of hedgehog (Hh) signaling. May participate in the trafficking and/or retention of GLI2 and GLI3 proteins at the ciliary tip. This is LisH domain-containing protein ARMC9 from Mus musculus (Mouse).